A 309-amino-acid chain; its full sequence is Sulfate adenylyltransferase subunit 2 (309 aa).

Belongs to the PAPS reductase family. CysD subfamily. As to quaternary structure, heterodimer composed of CysD, the smaller subunit, and CysN.

It carries out the reaction sulfate + ATP + H(+) = adenosine 5'-phosphosulfate + diphosphate. Its pathway is sulfur metabolism; hydrogen sulfide biosynthesis; sulfite from sulfate: step 1/3. Functionally, with CysN forms the ATP sulfurylase (ATPS) that catalyzes the adenylation of sulfate producing adenosine 5'-phosphosulfate (APS) and diphosphate, the first enzymatic step in sulfur assimilation pathway. APS synthesis involves the formation of a high-energy phosphoric-sulfuric acid anhydride bond driven by GTP hydrolysis by CysN coupled to ATP hydrolysis by CysD. The polypeptide is Sulfate adenylyltransferase subunit 2 (Mycobacterium sp. (strain JLS)).